Here is a 356-residue protein sequence, read N- to C-terminus: MSTVTITDLARENVRNLTPYQSARRLGGNGDVWLNANEYPTAVEFQLTQQTLNRYPECQPKAVIDNYAQYAGIKPEQVLVSRGADEGIELLIRAFCEPGKDAILYCPPTYGMYSVSAETIGVECRTVPTLDNWQLDLQGISDKLDGVKVVYVCSPNNPTGQLINPQDFRTLLELTRGKAIVVADEAYIEFCPQASLAGWLTEYPHLAILRTLSKAFALAGLRCGFTLANEEVINLLMKVIAPYPLSTPVADIAAQALSPQGIVAMRERVVQIIAEREYLIAALKEIPCVEQVFDSETNYILARFKASSAVFKSLWDQGIILRDQNKQPSLSGCLRITVGTREESQRVIDALRAEQV.

Lys-214 bears the N6-(pyridoxal phosphate)lysine mark.

Belongs to the class-II pyridoxal-phosphate-dependent aminotransferase family. Histidinol-phosphate aminotransferase subfamily. Homodimer. Pyridoxal 5'-phosphate is required as a cofactor.

It carries out the reaction L-histidinol phosphate + 2-oxoglutarate = 3-(imidazol-4-yl)-2-oxopropyl phosphate + L-glutamate. Its pathway is amino-acid biosynthesis; L-histidine biosynthesis; L-histidine from 5-phospho-alpha-D-ribose 1-diphosphate: step 7/9. The protein is Histidinol-phosphate aminotransferase of Escherichia coli O7:K1 (strain IAI39 / ExPEC).